The sequence spans 429 residues: Serine hydroxymethyltransferase (429 aa).

Residues leucine 126 and glycine 130–leucine 132 contribute to the (6S)-5,6,7,8-tetrahydrofolate site. N6-(pyridoxal phosphate)lysine is present on lysine 235. Serine 359–phenylalanine 361 contributes to the (6S)-5,6,7,8-tetrahydrofolate binding site.

This sequence belongs to the SHMT family. As to quaternary structure, homodimer. Pyridoxal 5'-phosphate is required as a cofactor.

It is found in the cytoplasm. The enzyme catalyses (6R)-5,10-methylene-5,6,7,8-tetrahydrofolate + glycine + H2O = (6S)-5,6,7,8-tetrahydrofolate + L-serine. Its pathway is one-carbon metabolism; tetrahydrofolate interconversion. It participates in amino-acid biosynthesis; glycine biosynthesis; glycine from L-serine: step 1/1. In terms of biological role, catalyzes the reversible interconversion of serine and glycine with tetrahydrofolate (THF) serving as the one-carbon carrier. This reaction serves as the major source of one-carbon groups required for the biosynthesis of purines, thymidylate, methionine, and other important biomolecules. Also exhibits THF-independent aldolase activity toward beta-hydroxyamino acids, producing glycine and aldehydes, via a retro-aldol mechanism. This Synechococcus sp. (strain CC9902) protein is Serine hydroxymethyltransferase.